The following is a 273-amino-acid chain: Formamidopyrimidine-DNA glycosylase (273 aa).

The Schiff-base intermediate with DNA role is filled by Pro2. The Proton donor role is filled by Glu3. The Proton donor; for beta-elimination activity role is filled by Lys60. Positions 94, 113, and 154 each coordinate DNA. The FPG-type zinc finger occupies 239 to 273 (NAYDREGQPCPRCGATIIKTVVAQRGTHYCPECQR). Arg263 functions as the Proton donor; for delta-elimination activity in the catalytic mechanism.

This sequence belongs to the FPG family. Monomer. Requires Zn(2+) as cofactor.

The enzyme catalyses Hydrolysis of DNA containing ring-opened 7-methylguanine residues, releasing 2,6-diamino-4-hydroxy-5-(N-methyl)formamidopyrimidine.. It carries out the reaction 2'-deoxyribonucleotide-(2'-deoxyribose 5'-phosphate)-2'-deoxyribonucleotide-DNA = a 3'-end 2'-deoxyribonucleotide-(2,3-dehydro-2,3-deoxyribose 5'-phosphate)-DNA + a 5'-end 5'-phospho-2'-deoxyribonucleoside-DNA + H(+). In terms of biological role, involved in base excision repair of DNA damaged by oxidation or by mutagenic agents. Acts as a DNA glycosylase that recognizes and removes damaged bases. Has a preference for oxidized purines, such as 7,8-dihydro-8-oxoguanine (8-oxoG). Has AP (apurinic/apyrimidinic) lyase activity and introduces nicks in the DNA strand. Cleaves the DNA backbone by beta-delta elimination to generate a single-strand break at the site of the removed base with both 3'- and 5'-phosphates. This chain is Formamidopyrimidine-DNA glycosylase, found in Roseiflexus sp. (strain RS-1).